The chain runs to 236 residues: Phosphoribosylaminoimidazole-succinocarboxamide synthase (236 aa).

It belongs to the SAICAR synthetase family.

The catalysed reaction is 5-amino-1-(5-phospho-D-ribosyl)imidazole-4-carboxylate + L-aspartate + ATP = (2S)-2-[5-amino-1-(5-phospho-beta-D-ribosyl)imidazole-4-carboxamido]succinate + ADP + phosphate + 2 H(+). The protein operates within purine metabolism; IMP biosynthesis via de novo pathway; 5-amino-1-(5-phospho-D-ribosyl)imidazole-4-carboxamide from 5-amino-1-(5-phospho-D-ribosyl)imidazole-4-carboxylate: step 1/2. This chain is Phosphoribosylaminoimidazole-succinocarboxamide synthase (purC), found in Rickettsia prowazekii (strain Madrid E).